The sequence spans 157 residues: NudC domain-containing protein 2 (157 aa).

Residue Ser-2 is modified to N-acetylserine. Positions 14–104 constitute a CS domain; that stretch reads CGTPWGQWYQ…DAANCWTSLL (91 aa). Positions 134–157 are disordered; that stretch reads FDFSGAEISGNYTKGGPDFSNLEK. Ser-142 bears the Phosphoserine mark. The residue at position 145 (Tyr-145) is a Phosphotyrosine.

In terms of assembly, interacts with LIS1.

Its subcellular location is the chromosome. The protein localises to the centromere. It is found in the kinetochore. It localises to the cytoplasm. The protein resides in the cytoskeleton. Its subcellular location is the microtubule organizing center. The protein localises to the centrosome. It is found in the spindle pole. Functionally, may regulate the LIS1/dynein pathway by stabilizing LIS1 with Hsp90 chaperone. The chain is NudC domain-containing protein 2 (Nudcd2) from Mus musculus (Mouse).